Here is a 347-residue protein sequence, read N- to C-terminus: Probable cytosolic iron-sulfur protein assembly protein 1 (347 aa).

WD repeat units follow at residues 11 to 48, 62 to 101, 122 to 161, 168 to 207, 212 to 255, 266 to 304, and 311 to 347; these read LHNEKIWDIDCYKGLLATASTDRRIKIVNIGDIGDGLV, SHKKTVRSVAWRPHSTILAAGSFDSTVSIWAKDENDGDAD, GHENEVKSVAWSKDGYFLATCSRDKSVWIWESDEMGEEYE, EHSQDVKHVVWHPFKDILASSSYDDTIRIWKEYDDDWEAA, GHEG…SIEE, VHGKPVYSVSWSEDGLIASAGSDGMLVIYKENKDNVWEV, and SHSIYEINVVKWIKLNNGKSYLATAGDDGYVNIWAYN.

Belongs to the WD repeat CIA1 family. Interacts with NAR1.

It localises to the cytoplasm. Its subcellular location is the nucleus. Its function is as follows. Essential component of the cytosolic iron-sulfur (Fe/S) protein assembly machinery. Required for the maturation of extramitochondrial Fe/S proteins. This is Probable cytosolic iron-sulfur protein assembly protein 1 from Vanderwaltozyma polyspora (strain ATCC 22028 / DSM 70294 / BCRC 21397 / CBS 2163 / NBRC 10782 / NRRL Y-8283 / UCD 57-17) (Kluyveromyces polysporus).